A 266-amino-acid chain; its full sequence is GTP cyclohydrolase III (266 aa).

This sequence belongs to the archaeal-type GTP cyclohydrolase family.

It catalyses the reaction GTP + 3 H2O = 2-amino-5-formylamino-6-(5-phospho-D-ribosylamino)pyrimidin-4(3H)-one + 2 phosphate + 2 H(+). Catalyzes the formation of 2-amino-5-formylamino-6-ribofuranosylamino-4(3H)-pyrimidinone ribonucleotide monophosphate and inorganic phosphate from GTP. Also has an independent pyrophosphate phosphohydrolase activity. In Methanococcus maripaludis (strain C5 / ATCC BAA-1333), this protein is GTP cyclohydrolase III.